We begin with the raw amino-acid sequence, 911 residues long: Protein translocase subunit SecA (911 aa).

ATP is bound by residues Q87, 105 to 109, and D512; that span reads GEGKT. Positions 861–893 are disordered; that stretch reads APGLESEQLSEEGAEVAVASAPVRNDQKLGRNE. Zn(2+)-binding residues include C895, C897, C906, and H907.

The protein belongs to the SecA family. In terms of assembly, monomer and homodimer. Part of the essential Sec protein translocation apparatus which comprises SecA, SecYEG and auxiliary proteins SecDF-YajC and YidC. Zn(2+) serves as cofactor.

It localises to the cell inner membrane. Its subcellular location is the cytoplasm. The enzyme catalyses ATP + H2O + cellular proteinSide 1 = ADP + phosphate + cellular proteinSide 2.. Functionally, part of the Sec protein translocase complex. Interacts with the SecYEG preprotein conducting channel. Has a central role in coupling the hydrolysis of ATP to the transfer of proteins into and across the cell membrane, serving both as a receptor for the preprotein-SecB complex and as an ATP-driven molecular motor driving the stepwise translocation of polypeptide chains across the membrane. The polypeptide is Protein translocase subunit SecA (Pseudomonas putida (strain ATCC 700007 / DSM 6899 / JCM 31910 / BCRC 17059 / LMG 24140 / F1)).